The sequence spans 490 residues: MNAPVNPKKLIKGALGDWEVVIGMEIHAQVTSRSKLFSGASTAFGAEPNDNVSLVDAAMPGMLPVINRECVAQAVRTGLGLKAQINHRSVFDRKNYFYPDLPQGYQISQYKSPIVGEGEVLVDLPEGETIRVGIERLHLEQDAGKSLHDQHPSLSFVDLNRSGVALMEIVSKPDLRSAEEAKAYVTKLRTILRYLGTCDGDMEKGNLRADVNVSVRRPGEFLGTRCEIKNVNSIRFIGQAIEAEARRQIAILEDGGVIEQETRLFDPNKGETRSMRSKEEAHDYRYFPDPDLLPLEIDDAFIDELKTELPELPDTKKARFVAEYGLSAYDATVLVAERASADYFEAVARGRDGKAAANWVINELFGRLNKEGHGIEDSPVSAEQLGAIIDLIADGTISGKIAKDLFEIVWSEGGDPRAIVESRGLRQVTDTGAIEAAVDQIIAANPDKVVQAQAKPTLLGWFVGQTMKATGGKANPAAVNALLKAKLGIE.

Belongs to the GatB/GatE family. GatB subfamily. In terms of assembly, heterotrimer of A, B and C subunits.

The catalysed reaction is L-glutamyl-tRNA(Gln) + L-glutamine + ATP + H2O = L-glutaminyl-tRNA(Gln) + L-glutamate + ADP + phosphate + H(+). The enzyme catalyses L-aspartyl-tRNA(Asn) + L-glutamine + ATP + H2O = L-asparaginyl-tRNA(Asn) + L-glutamate + ADP + phosphate + 2 H(+). Functionally, allows the formation of correctly charged Asn-tRNA(Asn) or Gln-tRNA(Gln) through the transamidation of misacylated Asp-tRNA(Asn) or Glu-tRNA(Gln) in organisms which lack either or both of asparaginyl-tRNA or glutaminyl-tRNA synthetases. The reaction takes place in the presence of glutamine and ATP through an activated phospho-Asp-tRNA(Asn) or phospho-Glu-tRNA(Gln). The chain is Aspartyl/glutamyl-tRNA(Asn/Gln) amidotransferase subunit B from Methylobacterium nodulans (strain LMG 21967 / CNCM I-2342 / ORS 2060).